The sequence spans 140 residues: Blasticidin-S deaminase (140 aa).

One can recognise a CMP/dCMP-type deaminase domain in the interval 8-140 (QQDLELVEVA…ELIPLKYTRN (133 aa)). Cysteine 59 lines the Zn(2+) pocket. Residue glutamate 61 is the Proton donor of the active site. Positions 100 and 103 each coordinate Zn(2+).

The protein belongs to the cytidine and deoxycytidylate deaminase family. Zn(2+) serves as cofactor.

It catalyses the reaction blasticidin S + H2O + H(+) = deaminohydroxyblasticidin S + NH4(+). Its function is as follows. Catalyzes the deamination of the cytosine moiety of the antibiotics blasticidin S, cytomycin and acetylblasticidin S. This is Blasticidin-S deaminase (bsr) from Bacillus cereus.